Consider the following 795-residue polypeptide: Putative replication origin-binding protein (795 aa).

The 169-residue stretch at 121–289 folds into the Helicase ATP-binding domain; that stretch reads WLSNDKIKTL…DNFGKSIVVN (169 aa). ATP is bound at residue 134–141; sequence SPMGTGKT.

It belongs to the mimivirus R1 family.

In terms of biological role, probably involved in DNA replication. May bind the genome origin of replication (ori). The sequence is that of Putative replication origin-binding protein from Acanthamoeba polyphaga (Amoeba).